The chain runs to 363 residues: Crh-like protein 3 (363 aa).

An N-terminal signal peptide occupies residues 1–19; that stretch reads MSLLYLVALFVASICSVTA. C25 and C32 form a disulfide bridge. In terms of domain architecture, GH16 spans 26–237; that stretch reads NPLTTTCPPD…YSKAPFTMVL (212 aa). 3 N-linked (GlcNAc...) asparagine glycosylation sites follow: N41, N47, and N56. E118 serves as the catalytic Nucleophile. The Proton donor role is filled by E122. Chitin is bound at residue E122. N-linked (GlcNAc...) asparagine glycans are attached at residues N127, N141, and N161. 3 residues coordinate chitin: R203, W207, and T218. N252 and N269 each carry an N-linked (GlcNAc...) asparagine glycan. Residues 298–318 traverse the membrane as a helical segment; the sequence is VYIGAGCVGAALLAGFIFFFI.

The protein belongs to the glycosyl hydrolase 16 family. CRH1 subfamily. The GPI-like anchor contains a phosphoceramide lipid group. The anchor position has not been determined.

The protein resides in the cell membrane. It localises to the secreted. The protein localises to the cell wall. It carries out the reaction Random endo-hydrolysis of N-acetyl-beta-D-glucosaminide (1-&gt;4)-beta-linkages in chitin and chitodextrins.. Its function is as follows. Dual chitinase/transglycosylase that plays a role in cell wall architecture. Chitinase and transglycosylase activities are coupled. Required for the polysaccharide cross-linking at the septa and the cell wall. More specifically, transfers chitin to 1,6-beta-glucan in the cell wall. This Aspergillus fumigatus (strain ATCC MYA-4609 / CBS 101355 / FGSC A1100 / Af293) (Neosartorya fumigata) protein is Crh-like protein 3.